A 399-amino-acid chain; its full sequence is Keratin, type I cytoskeletal 19 (399 aa).

The tract at residues 1 to 78 (MTSYSYRQSS…ATSDGLLAGN (78 aa)) is head. Residue Arg7 is modified to Omega-N-methylarginine. Ser14 and Ser22 each carry phosphoserine. Residue Arg24 is modified to Asymmetric dimethylarginine; alternate. An Omega-N-methylarginine; alternate modification is found at Arg24. Position 32 is an omega-N-methylarginine (Arg32). Phosphoserine is present on residues Ser35 and Ser40. 2 positions are modified to omega-N-methylarginine: Arg43 and Arg51. Ser57 and Ser71 each carry phosphoserine. The tract at residues 79 to 114 (EKLTMQNLNDRLASYLEKVRALEEANGDLEVKIRDW) is coil 1A. The IF rod domain maps to 79-390 (EKLTMQNLND…NLLEGQDAYF (312 aa)). A linker 1 region spans residues 115 to 132 (YQKQGPGPARDYSHYFKT). The segment at 133 to 224 (IEDLRDQILG…KNHEEEMSVL (92 aa)) is coil 1B. Residues 225–247 (KGQVGGQVSVEVDSAPGIDLAKI) are linker 12. The interval 243–389 (DLAKILSDMR…RNLLEGQDAY (147 aa)) is necessary for interaction with PNN. The segment at 248–386 (LSDMRSQYEV…ATYRNLLEGQ (139 aa)) is coil 2. At Thr322 the chain carries Phosphothreonine. The tract at residues 387 to 399 (DAYFNDLSLAKAL) is rod-like helical tail. At Ser394 the chain carries Phosphoserine.

Belongs to the intermediate filament family. Heterotetramer of two type I and two type II keratins. Interacts with PNN and the actin-binding domain of DMD.

Functionally, involved in the organization of myofibers. Together with KRT8, helps to link the contractile apparatus to dystrophin at the costameres of striated muscle. The polypeptide is Keratin, type I cytoskeletal 19 (KRT19) (Bos taurus (Bovine)).